Here is a 159-residue protein sequence, read N- to C-terminus: MNNIPVTAFGAKALEAALLKLKDVSRPRIIEDIRIARAHGDLKENAEYHAAKEEQSFVEGRIKEIELKLSRMQIIDVTKLSQDGRCVFGTTITLMNSVDNSEITYQIVGEDEADISLDKISCHSPIASALMGNEEGDKVIVKAPKGDIVYKILSVEYYI.

Positions 46 to 73 (AEYHAAKEEQSFVEGRIKEIELKLSRMQ) form a coiled coil.

The protein belongs to the GreA/GreB family.

Functionally, necessary for efficient RNA polymerase transcription elongation past template-encoded arresting sites. The arresting sites in DNA have the property of trapping a certain fraction of elongating RNA polymerases that pass through, resulting in locked ternary complexes. Cleavage of the nascent transcript by cleavage factors such as GreA or GreB allows the resumption of elongation from the new 3'terminus. GreA releases sequences of 2 to 3 nucleotides. The protein is Transcription elongation factor GreA of Vesicomyosocius okutanii subsp. Calyptogena okutanii (strain HA).